The sequence spans 144 residues: Large ribosomal subunit protein uL15 (144 aa).

The interval 1–52 (MRLNTISSAPGAKQAEKRVGRGIGSGWGKTCGRGHKGQKSRSGGFHKVGFEG) is disordered. Gly residues predominate over residues 21-31 (RGIGSGWGKTC).

This sequence belongs to the universal ribosomal protein uL15 family. In terms of assembly, part of the 50S ribosomal subunit.

Functionally, binds to the 23S rRNA. This is Large ribosomal subunit protein uL15 from Nitrosococcus oceani (strain ATCC 19707 / BCRC 17464 / JCM 30415 / NCIMB 11848 / C-107).